Consider the following 106-residue polypeptide: ATP-dependent Clp protease adapter protein ClpS (106 aa).

The protein belongs to the ClpS family. In terms of assembly, binds to the N-terminal domain of the chaperone ClpA.

Involved in the modulation of the specificity of the ClpAP-mediated ATP-dependent protein degradation. The protein is ATP-dependent Clp protease adapter protein ClpS of Cronobacter sakazakii (strain ATCC BAA-894) (Enterobacter sakazakii).